The primary structure comprises 475 residues: Ankyrin repeat, SAM and basic leucine zipper domain-containing protein 1 (475 aa).

A disordered region spans residues 1-25 (MAAGALRGLPVAGGGESSESEDDGW). A phosphoserine mark is found at S17, S18, and S20. 6 ANK repeats span residues 45-74 (EKKEKFKKAMTIGDVSLVQELLDSGISVDS), 78-107 (YGWTPLMYAASVANAELVRVLLDRGANASF), 110-144 (DKQTILITACSAHGSEEQILKCVELLLSRNADPNV), 148-177 (RLMTPIMYAARDGHTQVVALLVAHGAEVNT), 181-210 (NGYTALTWAARQGHKNIVLKLLELGANKML), and 214-243 (DGKMPSEIAKRNKHHEIFNLLSFTLNPLEG). In terms of domain architecture, SAM spans 272-334 (SYTAFGDLEV…KILAALKELQ (63 aa)).

As to quaternary structure, interacts with DDX4, PIWIL1, RANBP9 and TDRD1.

The protein localises to the cytoplasm. Its function is as follows. Plays a central role during spermatogenesis by repressing transposable elements and preventing their mobilization, which is essential for the germline integrity. Acts via the piRNA metabolic process, which mediates the repression of transposable elements during meiosis by forming complexes composed of piRNAs and Piwi proteins and governs the methylation and subsequent repression of transposons. Its association with pi-bodies suggests a participation in the primary piRNAs metabolic process. Required prior to the pachytene stage to facilitate the production of multiple types of piRNAs, including those associated with repeats involved in the regulation of retrotransposons. May act by mediating protein-protein interactions during germ cell maturation. The sequence is that of Ankyrin repeat, SAM and basic leucine zipper domain-containing protein 1 (ASZ1) from Chlorocebus aethiops (Green monkey).